We begin with the raw amino-acid sequence, 154 residues long: MSELPVVTIYTDGACSGNPGPGGWGAILKFGDKEKELNGGERHTTNNQMELMAAISALEALKKPCTVDLYTDSQYVRQGITGWIHGWKRNGWRTADKKPVKNVELWQRLDAALKAHQVRWHWVKGHAGHPENERADQLARDGIVKARLQQRVAE.

The 142-residue stretch at 3-144 folds into the RNase H type-1 domain; that stretch reads ELPVVTIYTD…ADQLARDGIV (142 aa). 4 residues coordinate Mg(2+): D12, E50, D72, and D136.

This sequence belongs to the RNase H family. As to quaternary structure, monomer. The cofactor is Mg(2+).

It is found in the cytoplasm. It catalyses the reaction Endonucleolytic cleavage to 5'-phosphomonoester.. In terms of biological role, endonuclease that specifically degrades the RNA of RNA-DNA hybrids. This chain is Ribonuclease H, found in Bradyrhizobium diazoefficiens (strain JCM 10833 / BCRC 13528 / IAM 13628 / NBRC 14792 / USDA 110).